The primary structure comprises 600 residues: Na(+)/dicarboxylate cotransporter 3 (600 aa).

Topologically, residues 1–16 (MAALAALAKKVWSARR) are cytoplasmic. Residues 17–37 (LLVLLLVPLALLPILFALPPK) form a helical membrane-spanning segment. The Extracellular portion of the chain corresponds to 38–55 (EGRCLYVILLMAVYWCTE). The helical transmembrane segment at 56-76 (ALPLSVTALLPIILFPFMGIL) threads the bilayer. Topologically, residues 77-82 (PSSKVC) are cytoplasmic. The chain crosses the membrane as a helical span at residues 83-103 (PQYFLDTNFLFLSGLIMASAI). The Extracellular portion of the chain corresponds to 104-137 (EEWNLHRRIALKVLMLVGVQPARLILGMMVTTSF). Residues 138–158 (LSMWLSNTASTAMMLPIASAI) traverse the membrane as a helical segment. The Cytoplasmic portion of the chain corresponds to 159 to 229 (LKSLFGQREA…KEEEHRRNIW (71 aa)). The helical transmembrane segment at 230-250 (KGFLISIPYSASIGGTATLTG) threads the bilayer. Residues 251 to 278 (TAPNLILLGQLKSFFPQCDVVNFGSWFI) lie on the Extracellular side of the membrane. Residues 279–299 (FAFPLMLLFLLVGWLWISFLY) traverse the membrane as a helical segment. Residues 300-336 (GGMSWRSWRKKKSKIRADAEDQAKAVIQEEFQNLGPI) lie on the Cytoplasmic side of the membrane. The helical transmembrane segment at 337 to 357 (KFAEQAVFILFCTFAILLFSR) threads the bilayer. Residues 358-372 (DPKFIPGWASLFAPG) are Extracellular-facing. The helical transmembrane segment at 373-393 (FVSDAVTGVAIVTILFFFPSQ) threads the bilayer. Over 394–422 (KPSLKWWFDFKAPNSETEPLLSWKKAQET) the chain is Cytoplasmic. Residues 423-443 (VPWNIILLLGGGFAMAKGCEE) constitute an intramembrane region (helical). Over 444–461 (SGLSAWIGGQLHPLEHVP) the chain is Cytoplasmic. Residues 462-482 (PLLAVLLITVVIAFFTEFASN) form a helical membrane-spanning segment. Residues 483 to 505 (TATIIIFLPVLAELAIRLHVHPL) are Extracellular-facing. The helical transmembrane segment at 506-526 (YLMIPGTVGCSYAFMLPVSTP) threads the bilayer. At 527–546 (PNSIAFSTGHLLVKDMVRTG) the chain is on the cytoplasmic side. A helical transmembrane segment spans residues 547 to 567 (LLMNLMGVLLLSLAMNTWAQT). At 568–600 (IFQLGTFPDWANTHAANATALPPALTNNTVQTF) the chain is on the extracellular side. N-linked (GlcNAc...) asparagine glycosylation is found at N584 and N594.

It belongs to the SLC13A/DASS transporter (TC 2.A.47) family. NADC subfamily. In terms of tissue distribution, highly expressed in kidney, and at much lower levels in brain.

It is found in the cell membrane. It carries out the reaction succinate(out) + 3 Na(+)(out) = succinate(in) + 3 Na(+)(in). The enzyme catalyses 2-oxoglutarate(out) + 3 Na(+)(out) = 2-oxoglutarate(in) + 3 Na(+)(in). The catalysed reaction is N-acetyl-L-aspartate(out) + 3 Na(+)(out) = N-acetyl-L-aspartate(in) + 3 Na(+)(in). It catalyses the reaction fumarate(out) + 3 Na(+)(out) = fumarate(in) + 3 Na(+)(in). It carries out the reaction glutarate(out) + 3 Na(+)(out) = glutarate(in) + 3 Na(+)(in). The enzyme catalyses 2,2-dimethylsuccinate(out) + 3 Na(+)(out) = 2,2-dimethylsuccinate(in) + 3 Na(+)(in). The catalysed reaction is 2,3-dimethylsuccinate(out) + 3 Na(+)(out) = 2,3-dimethylsuccinate(in) + 3 Na(+)(in). It catalyses the reaction malate(out) + 3 Na(+)(out) = malate(in) + 3 Na(+)(in). It carries out the reaction itaconate(out) + 3 Na(+)(out) = itaconate(in) + 3 Na(+)(in). In terms of biological role, high-affinity sodium-dicarboxylate cotransporter that accepts a range of substrates with 4-6 carbon atoms, such as the citric acid cycle intermediates succinate and alpha-ketoglutarate (2-oxoglutarate), as well as other compounds including N-acetyl-L-aspartate. Transports the dicarboxylate into the cell with a probable stoichiometry of 3 Na(+) for 1 divalent dicarboxylate, rendering the process electrogenic. Can transport citrate in a Na(+)-dependent manner, recognizing the divalent form of citrate rather than the trivalent form which is normally found in blood. Imports itaconate in hepatocytes leading to activation of TFEB-dependent lysosomal biogenesis involved in antibacterial innate immune response. This chain is Na(+)/dicarboxylate cotransporter 3 (Slc13a3), found in Mus musculus (Mouse).